Consider the following 468-residue polypeptide: ATP-dependent protease ATPase subunit HslU (468 aa).

ATP-binding positions include Val22 and 64-69 (GVGKTE). Residues 166-187 (FGNNDEEDEEPPTEDIKTKRSE) are disordered. Residues 169-178 (NDEEDEEPPT) show a composition bias toward acidic residues. The ATP site is built by Asp281, Glu346, and Arg418.

This sequence belongs to the ClpX chaperone family. HslU subfamily. As to quaternary structure, a double ring-shaped homohexamer of HslV is capped on each side by a ring-shaped HslU homohexamer. The assembly of the HslU/HslV complex is dependent on binding of ATP.

Its subcellular location is the cytoplasm. In terms of biological role, ATPase subunit of a proteasome-like degradation complex; this subunit has chaperone activity. The binding of ATP and its subsequent hydrolysis by HslU are essential for unfolding of protein substrates subsequently hydrolyzed by HslV. HslU recognizes the N-terminal part of its protein substrates and unfolds these before they are guided to HslV for hydrolysis. The protein is ATP-dependent protease ATPase subunit HslU of Staphylococcus carnosus (strain TM300).